Consider the following 132-residue polypeptide: Transcription antitermination protein NusB (132 aa).

It belongs to the NusB family.

In terms of biological role, involved in transcription antitermination. Required for transcription of ribosomal RNA (rRNA) genes. Binds specifically to the boxA antiterminator sequence of the ribosomal RNA (rrn) operons. This is Transcription antitermination protein NusB from Campylobacter jejuni subsp. jejuni serotype O:6 (strain 81116 / NCTC 11828).